The sequence spans 156 residues: uncharacterized protein (156 aa).

Residue His-55 is part of the active site.

The protein belongs to the thioester dehydratase family. FabZ subfamily.

This is an uncharacterized protein from Halalkalibacterium halodurans (strain ATCC BAA-125 / DSM 18197 / FERM 7344 / JCM 9153 / C-125) (Bacillus halodurans).